Reading from the N-terminus, the 130-residue chain is Endoglucanase 2 (130 aa).

Catalysis depends on residues H47, D98, and E107.

This sequence belongs to the glycosyl hydrolase 9 (cellulase E) family.

It catalyses the reaction Endohydrolysis of (1-&gt;4)-beta-D-glucosidic linkages in cellulose, lichenin and cereal beta-D-glucans.. Its function is as follows. Involved in ripening fruit process. The chain is Endoglucanase 2 (CEL2) from Persea americana (Avocado).